A 333-amino-acid chain; its full sequence is FAD-dependent monooxygenase pytG (333 aa).

The chain crosses the membrane as a helical span at residues 6–26; the sequence is LPNVSVAIIGAGIGGLTLGAF. 2 residues coordinate FAD: E38 and R109. N303 is a glycosylation site (N-linked (GlcNAc...) asparagine).

It belongs to the paxM FAD-dependent monooxygenase family. The cofactor is FAD.

Its subcellular location is the membrane. It participates in secondary metabolite biosynthesis. Functionally, FAD-dependent monooxygenase; part of the gene cluster that mediates the biosynthesis of pyranterreones, a family of antioxidative compounds. The first step of pyranonigrins biosynthesis is performed by the hybrid PKS-NRPS synthetase pytA that condenses 4 malonyl-CoA units ato the acetyl starter unit by the modular PKS of pytA. The acyl chain is then connected to an L-serine through the amide bond by the modular NRPS of pytA. A tetramic acid is formed and released from the PKS-NRPS pytA to give pyranterreone 5 with the help of the thioesterase pytI. Pyranterreone 5 could be methylated by pytC to afford pyranterreone 6. Both pyranterreones 5 and 6 are subsequently oxidized by the FAD-linked oxidoreductase pytB and the cytochrome P450 monooxygenase pytD to form the fused gamma-pyrone core, resulting in pyranterreones 7 and 11, respectively. The hydroxy group at C-8 of pyranterreones 7 and 11 are dehydrated by the aspartyl protease pytH to form a delta-7 double bond to give pyranterreones 3 and 1, 2 accordingly. The exo-methylene of pyranterreone 3 could be reduced into a pendant methyl by reductase pytE to provide pyranterreone 4, also known as cordylactam. Pyranterreone 4 can be reconverted to pyranterreone 3 through pytB-catalyzed dehydrogenation or further oxidized to pyranterreones 9 and 10. This Aspergillus terreus (strain NIH 2624 / FGSC A1156) protein is FAD-dependent monooxygenase pytG.